The chain runs to 444 residues: UDP-N-acetylmuramate--L-alanine ligase (444 aa).

ATP is bound at residue 110 to 116 (GAHGKTS).

The protein belongs to the MurCDEF family.

It localises to the cytoplasm. The catalysed reaction is UDP-N-acetyl-alpha-D-muramate + L-alanine + ATP = UDP-N-acetyl-alpha-D-muramoyl-L-alanine + ADP + phosphate + H(+). Its pathway is cell wall biogenesis; peptidoglycan biosynthesis. Its function is as follows. Cell wall formation. The polypeptide is UDP-N-acetylmuramate--L-alanine ligase (Streptococcus pneumoniae (strain Hungary19A-6)).